A 413-amino-acid chain; its full sequence is Argininosuccinate synthase (413 aa).

Alanine 8–serine 16 is an ATP binding site. Residue tyrosine 87 coordinates L-citrulline. Glycine 117 provides a ligand contact to ATP. L-aspartate is bound by residues threonine 119, asparagine 123, and aspartate 124. Asparagine 123 contributes to the L-citrulline binding site. L-citrulline-binding residues include arginine 127, serine 175, glutamate 259, and tyrosine 271.

The protein belongs to the argininosuccinate synthase family. Type 1 subfamily. As to quaternary structure, homotetramer.

It localises to the cytoplasm. It carries out the reaction L-citrulline + L-aspartate + ATP = 2-(N(omega)-L-arginino)succinate + AMP + diphosphate + H(+). The protein operates within amino-acid biosynthesis; L-arginine biosynthesis; L-arginine from L-ornithine and carbamoyl phosphate: step 2/3. In Micrococcus luteus (strain ATCC 4698 / DSM 20030 / JCM 1464 / CCM 169 / CCUG 5858 / IAM 1056 / NBRC 3333 / NCIMB 9278 / NCTC 2665 / VKM Ac-2230) (Micrococcus lysodeikticus), this protein is Argininosuccinate synthase.